The sequence spans 295 residues: Nucleotide-binding protein LSL_1171 (295 aa).

13 to 20 (GMSGAGKT) contacts ATP. 63 to 66 (DLRS) serves as a coordination point for GTP.

It belongs to the RapZ-like family.

Displays ATPase and GTPase activities. In Ligilactobacillus salivarius (strain UCC118) (Lactobacillus salivarius), this protein is Nucleotide-binding protein LSL_1171.